Here is a 493-residue protein sequence, read N- to C-terminus: Probable cytosol aminopeptidase (493 aa).

Positions 262 and 267 each coordinate Mn(2+). Lys274 is a catalytic residue. Mn(2+) contacts are provided by Asp285, Asp344, and Glu346. Arg348 is a catalytic residue.

It belongs to the peptidase M17 family. It depends on Mn(2+) as a cofactor.

The protein resides in the cytoplasm. It carries out the reaction Release of an N-terminal amino acid, Xaa-|-Yaa-, in which Xaa is preferably Leu, but may be other amino acids including Pro although not Arg or Lys, and Yaa may be Pro. Amino acid amides and methyl esters are also readily hydrolyzed, but rates on arylamides are exceedingly low.. The enzyme catalyses Release of an N-terminal amino acid, preferentially leucine, but not glutamic or aspartic acids.. Presumably involved in the processing and regular turnover of intracellular proteins. Catalyzes the removal of unsubstituted N-terminal amino acids from various peptides. This Xanthomonas campestris pv. campestris (strain 8004) protein is Probable cytosol aminopeptidase.